The following is a 312-amino-acid chain: uncharacterized protein (312 aa).

An N-terminal signal peptide occupies residues 1–19 (MFSKYLVTASSLFVALTSA).

This is an uncharacterized protein from Saccharomyces cerevisiae (strain ATCC 204508 / S288c) (Baker's yeast).